The following is an 847-amino-acid chain: MDIRNEFLQFFHNKGHAVYPSMPLVPNDATLLFTNAGMVQFKDIFTGIVPRPSIPRATSSQLCMRAGGKHNDLENVGYTARHHTLFEMLGNFSFGDYFKEEAILFAWEFVTKNLGFKSKDLYISVHEKDDEAVKLWEKFVPFERIKKMGDKDNFWQMGDSGPCGPCSEIYIDQGEKHFKGSEDYFGGEGDRFLEIWNLVFMQYERSNDGVLSPLPKPSIDTGMGLERVQALLEHKLNNFDSSLFAPLMEEISDLASLDYASEFQPSFRVVADHARAVAFLLAQGVHFNKEGRGYVLRRILRRALRHGYLMGLKEAFLYKVVGVVCEQFSNTHAYLKESKEMVMKECFEEEERFLETLESGMELFNLSLEHLNENKIFDGKIAFKLYDTFGFPLDLTNDMLRSHGACVDMQGFESCMQEQVKRSKASWKGKQNNADFSAILNAYAPNVFVGYETTECCAKVLGFFDSDFKEITDAKPNQEVWVLLEKTPFYAEGGGAIGDRGALLKDDEEAAIVLDTKNFFGLNFSLLEIKKALKKGDQVIAQVSDERLEIAKHHSATHLLQSALREVLGSHVSQAGSLVESKRLRFDFSHPKALNDEELEKVEDLVNAQIFKHLNSQVEHMPLNQAKDKGALALFSEKYAENVRVVSFKEASIELCGGIHVENTGLIGGFRIVKESGVSSGVRRIEAVCGKAFYQLAKEENKELKNAKIALKNNDVIAGINKLKESVKNSQKAPVSVELPVEKIHGVNLVVGVVEQGDIKEMIDRLKSKHERLLAMVFKKENERITLACGVKNAPIKANVWANEVAQILGGKGGGRGDFASAGGRDIENLQAALNLAKNTALKALEG.

Zn(2+)-binding residues include His-554, His-558, Cys-656, and His-660.

Belongs to the class-II aminoacyl-tRNA synthetase family. The cofactor is Zn(2+).

It is found in the cytoplasm. It carries out the reaction tRNA(Ala) + L-alanine + ATP = L-alanyl-tRNA(Ala) + AMP + diphosphate. In terms of biological role, catalyzes the attachment of alanine to tRNA(Ala) in a two-step reaction: alanine is first activated by ATP to form Ala-AMP and then transferred to the acceptor end of tRNA(Ala). Also edits incorrectly charged Ser-tRNA(Ala) and Gly-tRNA(Ala) via its editing domain. The sequence is that of Alanine--tRNA ligase from Helicobacter pylori (strain Shi470).